Here is a 166-residue protein sequence, read N- to C-terminus: Disulfide bond formation protein B (166 aa).

At 1–11 (MCNKLFAGRRG) the chain is on the cytoplasmic side. A helical membrane pass occupies residues 12–28 (YFLGFVASFGLVGLALF). The Periplasmic portion of the chain corresponds to 29-46 (LQQKYNLEPCPLCISQRI). Cysteines 38 and 41 form a disulfide. Residues 47-63 (AFMALGILFLLAALHNP) form a helical membrane-spanning segment. Topologically, residues 64–69 (GRVGRK) are cytoplasmic. The chain crosses the membrane as a helical span at residues 70–87 (VYGLLHVIAAATGIGIAA). At 88-144 (RHIWIQANPDKVMAECGAGFDYIMETFPLKKALDLIFKGTGECSAIDWTLFGLTIPQ) the chain is on the periplasmic side. A disulfide bond links C103 and C130. The chain crosses the membrane as a helical span at residues 145–163 (LSLIAFVGLGLFAVLLAFH). Residues 164–166 (KKA) are Cytoplasmic-facing.

Belongs to the DsbB family.

The protein resides in the cell inner membrane. Functionally, required for disulfide bond formation in some periplasmic proteins. Acts by oxidizing the DsbA protein. The polypeptide is Disulfide bond formation protein B (Methylobacillus flagellatus (strain ATCC 51484 / DSM 6875 / VKM B-1610 / KT)).